A 522-amino-acid chain; its full sequence is Glycerol kinase (522 aa).

T15 provides a ligand contact to substrate. R19 provides a ligand contact to ATP. Substrate contacts are provided by residues 89 to 90, Y143, and 255 to 256; these read RE and DQ. ATP contacts are provided by residues T276, G321, and 430-434; that span reads GATAN.

Belongs to the FGGY kinase family. In terms of tissue distribution, highly expressed in germinating seeds and senescent leaves, and at lower levels in roots, leaves, flowers and siliques.

It localises to the cytoplasm. Its subcellular location is the cytosol. It catalyses the reaction glycerol + ATP = sn-glycerol 3-phosphate + ADP + H(+). It participates in polyol metabolism; glycerol degradation via glycerol kinase pathway; sn-glycerol 3-phosphate from glycerol: step 1/1. In terms of biological role, key enzyme in the regulation of glycerol uptake and metabolism. Required for resistance to nonhost Pseudomonas bacteria and to the pathogenic fungus B.cinerea. This chain is Glycerol kinase (GLPK), found in Arabidopsis thaliana (Mouse-ear cress).